Here is an 85-residue protein sequence, read N- to C-terminus: Coiled-coil-helix-coiled-coil-helix domain-containing protein 7 (85 aa).

The 43-residue stretch at 13–55 folds into the CHCH domain; the sequence is INPCLSESDASTRCLDENNYDRERCSTYFLRYKNCRRFWNSIV. 2 short sequence motifs (cx9C motif) span residues 16–26 and 37–47; these read CLSESDASTRC and CSTYFLRYKNC. Cystine bridges form between cysteine 16–cysteine 47 and cysteine 26–cysteine 37.

Belongs to the CHCHD7 family. As to quaternary structure, monomer.

It localises to the mitochondrion intermembrane space. The polypeptide is Coiled-coil-helix-coiled-coil-helix domain-containing protein 7 (CHCHD7) (Homo sapiens (Human)).